Consider the following 294-residue polypeptide: Bifunctional protein FolD (294 aa).

Residues 175–177 (GVS) and Ile-243 each bind NADP(+).

It belongs to the tetrahydrofolate dehydrogenase/cyclohydrolase family. In terms of assembly, homodimer.

It carries out the reaction (6R)-5,10-methylene-5,6,7,8-tetrahydrofolate + NADP(+) = (6R)-5,10-methenyltetrahydrofolate + NADPH. The enzyme catalyses (6R)-5,10-methenyltetrahydrofolate + H2O = (6R)-10-formyltetrahydrofolate + H(+). Its pathway is one-carbon metabolism; tetrahydrofolate interconversion. Its function is as follows. Catalyzes the oxidation of 5,10-methylenetetrahydrofolate to 5,10-methenyltetrahydrofolate and then the hydrolysis of 5,10-methenyltetrahydrofolate to 10-formyltetrahydrofolate. The polypeptide is Bifunctional protein FolD (Xanthomonas campestris pv. campestris (strain 8004)).